The chain runs to 250 residues: 5-oxoprolinase subunit A (250 aa).

It belongs to the LamB/PxpA family. In terms of assembly, forms a complex composed of PxpA, PxpB and PxpC.

It carries out the reaction 5-oxo-L-proline + ATP + 2 H2O = L-glutamate + ADP + phosphate + H(+). In terms of biological role, catalyzes the cleavage of 5-oxoproline to form L-glutamate coupled to the hydrolysis of ATP to ADP and inorganic phosphate. This Paraburkholderia phytofirmans (strain DSM 17436 / LMG 22146 / PsJN) (Burkholderia phytofirmans) protein is 5-oxoprolinase subunit A.